A 382-amino-acid polypeptide reads, in one-letter code: Mannitol-1-phosphate 5-dehydrogenase (382 aa).

Residue Ala-4–Gly-15 coordinates NAD(+).

Belongs to the mannitol dehydrogenase family. In terms of assembly, monomer.

It catalyses the reaction D-mannitol 1-phosphate + NAD(+) = beta-D-fructose 6-phosphate + NADH + H(+). The polypeptide is Mannitol-1-phosphate 5-dehydrogenase (mtlD) (Streptococcus mutans serotype c (strain ATCC 700610 / UA159)).